The chain runs to 679 residues: DNA ligase (679 aa).

Residues Asp-36–Asp-40, Ser-85–Leu-86, and Glu-116 contribute to the NAD(+) site. Catalysis depends on Lys-118, which acts as the N6-AMP-lysine intermediate. Residues Arg-139, Glu-174, Lys-300, and Lys-324 each coordinate NAD(+). Zn(2+)-binding residues include Cys-418, Cys-421, Cys-436, and Cys-441. The BRCT domain occupies Glu-600–Lys-679.

This sequence belongs to the NAD-dependent DNA ligase family. LigA subfamily. The cofactor is Mg(2+). Mn(2+) serves as cofactor.

It catalyses the reaction NAD(+) + (deoxyribonucleotide)n-3'-hydroxyl + 5'-phospho-(deoxyribonucleotide)m = (deoxyribonucleotide)n+m + AMP + beta-nicotinamide D-nucleotide.. Its function is as follows. DNA ligase that catalyzes the formation of phosphodiester linkages between 5'-phosphoryl and 3'-hydroxyl groups in double-stranded DNA using NAD as a coenzyme and as the energy source for the reaction. It is essential for DNA replication and repair of damaged DNA. The chain is DNA ligase from Pelotomaculum thermopropionicum (strain DSM 13744 / JCM 10971 / SI).